Consider the following 747-residue polypeptide: Myotubularin-related protein 12 (747 aa).

Gly residues predominate over residues 1–14 (MLGKGVVGGGGGTK). The interval 1–21 (MLGKGVVGGGGGTKGPKPSFV) is disordered. Residues 205–643 (FDTLKDWCWE…PEIKVWAQRY (439 aa)) enclose the Myotubularin phosphatase domain. The tract at residues 449 to 558 (VPVFLLFLDC…KGQRKGMRFK (110 aa)) is interaction with MTM1. 3 positions are modified to phosphoserine: Ser-564, Ser-601, and Ser-716.

It belongs to the protein-tyrosine phosphatase family. Non-receptor class myotubularin subfamily. In terms of assembly, heterodimer with lipid phosphatase MTM1. Heterodimer with lipid phosphatase MTMR2.

It is found in the cytoplasm. Its subcellular location is the sarcoplasmic reticulum. It localises to the myofibril. The protein resides in the sarcomere. In terms of biological role, acts as an adapter for the myotubularin-related phosphatases. Regulates phosphatase MTM1 protein stability and possibly its intracellular location. By stabilizing MTM1 protein levels, required for skeletal muscle maintenance but not for myogenesis. This is Myotubularin-related protein 12 (MTMR12) from Pongo abelii (Sumatran orangutan).